Here is a 367-residue protein sequence, read N- to C-terminus: Queuine tRNA-ribosyltransferase (367 aa).

Asp91 (proton acceptor) is an active-site residue. Substrate-binding positions include Asp91–Phe95, Asp145, Gln188, and Gly215. Residue Asp265 is the Nucleophile of the active site. The tract at residues Thr270–Arg274 is RNA binding; important for wobble base 34 recognition. Zn(2+) is bound by residues Cys303, Cys305, Cys308, and His334.

This sequence belongs to the queuine tRNA-ribosyltransferase family. In terms of assembly, homodimer. Within each dimer, one monomer is responsible for RNA recognition and catalysis, while the other monomer binds to the replacement base PreQ1. Zn(2+) is required as a cofactor.

The enzyme catalyses 7-aminomethyl-7-carbaguanine + guanosine(34) in tRNA = 7-aminomethyl-7-carbaguanosine(34) in tRNA + guanine. Its pathway is tRNA modification; tRNA-queuosine biosynthesis. Functionally, catalyzes the base-exchange of a guanine (G) residue with the queuine precursor 7-aminomethyl-7-deazaguanine (PreQ1) at position 34 (anticodon wobble position) in tRNAs with GU(N) anticodons (tRNA-Asp, -Asn, -His and -Tyr). Catalysis occurs through a double-displacement mechanism. The nucleophile active site attacks the C1' of nucleotide 34 to detach the guanine base from the RNA, forming a covalent enzyme-RNA intermediate. The proton acceptor active site deprotonates the incoming PreQ1, allowing a nucleophilic attack on the C1' of the ribose to form the product. After dissociation, two additional enzymatic reactions on the tRNA convert PreQ1 to queuine (Q), resulting in the hypermodified nucleoside queuosine (7-(((4,5-cis-dihydroxy-2-cyclopenten-1-yl)amino)methyl)-7-deazaguanosine). In Thermosipho africanus (strain TCF52B), this protein is Queuine tRNA-ribosyltransferase.